Reading from the N-terminus, the 464-residue chain is Phospho-2-dehydro-3-deoxyheptonate aldolase AroG (464 aa).

Position 87 (C87) interacts with Mn(2+). Phosphoenolpyruvate-binding positions include R126, 285 to 286, K308, and R339; that span reads ER. H371, E413, and D443 together coordinate Mn(2+).

It belongs to the class-II DAHP synthase family. In terms of assembly, homodimer. Probably interacts with MSMEG_5536. The cofactor is Mn(2+). Requires Co(2+) as cofactor. Cd(2+) is required as a cofactor.

The enzyme catalyses D-erythrose 4-phosphate + phosphoenolpyruvate + H2O = 7-phospho-2-dehydro-3-deoxy-D-arabino-heptonate + phosphate. It participates in metabolic intermediate biosynthesis; chorismate biosynthesis; chorismate from D-erythrose 4-phosphate and phosphoenolpyruvate: step 1/7. Its function is as follows. Catalyzes an aldol-like condensation reaction between phosphoenolpyruvate (PEP) and D-erythrose 4-phosphate (E4P) to generate 3-deoxy-D-arabino-heptulosonate 7-phosphate (DAH7P) and inorganic phosphate. This chain is Phospho-2-dehydro-3-deoxyheptonate aldolase AroG (aroG), found in Mycolicibacterium smegmatis (strain ATCC 700084 / mc(2)155) (Mycobacterium smegmatis).